A 453-amino-acid polypeptide reads, in one-letter code: Plasmepsin II (453 aa).

Over 1–37 the chain is Cytoplasmic; sequence MDITVREHDFKHGFIKSNSTFDGLNIDNSKNKKKIQK. Positions 1–124 are excised as a propeptide; that stretch reads MDITVREHDF…SGLTKTNYLG (124 aa). A helical; Signal-anchor for type II membrane protein membrane pass occupies residues 38–58; that stretch reads GFQILYVLLFCSVMCGLFYYV. Over 59–453 the chain is Lumenal; it reads YENVWLQRDN…VGIALAKKNL (395 aa). The Peptidase A1 domain occupies 140–447; it reads FYGDAEVGDN…DYDNHSVGIA (308 aa). Asp-158 is a catalytic residue. Cys-171 and Cys-176 are oxidised to a cystine. Asp-338 is an active-site residue. Cys-373 and Cys-409 are oxidised to a cystine.

The protein belongs to the peptidase A1 family. In terms of assembly, component of the hemozoin formation complex (HFC) composed of falcipains FP2A and/or FP2B, plasmepsins PMII, PMIII/HAP and PMIV, heme detoxifying protein HDP and falcilysin FLN. The HFC complex is involved in hemoglobin degradation and detoxification of heme in the food vacuole during the asexual blood stage. Post-translationally, not N-glycosylated. In terms of processing, proteolytically cleaved into the soluble active mature form in the digestive vacuole by cysteine protease falcipains; the process begins at the early ring stage. Proteolysis requires an acidic environment. In absence of falcipains, autoprocessing may serve as an alternate activation system.

It localises to the membrane. It is found in the vacuole lumen. Its subcellular location is the vacuole membrane. It catalyses the reaction Hydrolysis of the bonds linking certain hydrophobic residues in hemoglobin or globin. Also cleaves small molecules substrates such as Ala-Leu-Glu-Arg-Thr-Phe-|-Phe(NO2)-Ser-Phe-Pro-Thr.. Inhibited by pepstatin A. Its function is as follows. During the asexual blood stage, participates in initial cleavage of native host hemoglobin (Hb) resulting in Hb denaturation. May cleave preferentially denatured hemoglobin that has been cleaved by PMI. Digestion of host Hb is an essential step which provides the parasite with amino acids for protein synthesis, and regulates osmolarity. This chain is Plasmepsin II, found in Plasmodium falciparum (isolate HB3).